The following is a 181-amino-acid chain: Biofilm-surface layer protein A (181 aa).

The signal sequence occupies residues methionine 1–alanine 28.

The protein belongs to the BslA/BslB family. Forms polymers.

It localises to the secreted. The protein localises to the cell wall. Involved in biofilm formation. Self-polymerizes and forms a layer on the surface of biofilms that confers hydrophobicity to the biofilm. The layer is stable and capable of resistance to high mechanical force compression. Required for complex colony architecture. May function synergistically with exopolysaccharides and TasA amyloid fibers to facilitate the assembly of the biofilm matrix. In Bacillus subtilis (strain 168), this protein is Biofilm-surface layer protein A.